The following is a 173-amino-acid chain: MIRPAPWVGAGHRGRGGEAGACTESLGSESGDVGCDAAEIDQFFPPAPAAGGPDDAGAEPCIPDLAAAAAAGKRRRGGFPPPMPRASGPLFLRAERRGGRLILTEVRADERERRVVFRAERDGGRLRLRFANDGDGPEAAGGGGGAGGGGGELCQVAAGRRGVQVGAVMMGAI.

The disordered stretch occupies residues 1 to 31 (MIRPAPWVGAGHRGRGGEAGACTESLGSESG).

This sequence belongs to the fantastic four family.

Involved in starch metabolism in endosperm. Acts as a modifier of SUGARY1 (SU1), an isoamylase starch-debranching enzyme involved in amylopectin biosynthesis in endosperm. The polypeptide is Protein SUGARY ENHANCER 1 (Zea mays (Maize)).